The primary structure comprises 262 residues: Global transcriptional regulator CodY (262 aa).

The interval 1–159 (MATLLEKTRK…ATTVIGVQLS (159 aa)) is GAF domain. The H-T-H motif DNA-binding region spans 207 to 226 (ASVIADKIGITRSVIVNALR).

The protein belongs to the CodY family.

The protein localises to the cytoplasm. DNA-binding global transcriptional regulator which is involved in the adaptive response to starvation and acts by directly or indirectly controlling the expression of numerous genes in response to nutrient availability. During rapid exponential growth, CodY is highly active and represses genes whose products allow adaptation to nutrient depletion. The chain is Global transcriptional regulator CodY from Lactococcus lactis subsp. lactis (strain IL1403) (Streptococcus lactis).